The sequence spans 638 residues: Growth hormone receptor (638 aa).

The signal sequence occupies residues 1–18; it reads MDLWQLLLTLAVAGSGNA. The Extracellular portion of the chain corresponds to 19 to 264; that stretch reads VSGSEATPAI…SPFACEEDFQ (246 aa). 2 disulfides stabilise this stretch: Cys56–Cys66 and Cys101–Cys112. N-linked (GlcNAc...) asparagine glycosylation is present at Asn115. A disulfide bond links Cys126 and Cys140. The Fibronectin type-III domain occupies 151–254; it reads PPIGLNWTLL…EVLYVALPQM (104 aa). Residues Asn156, Asn161, and Asn200 are each glycosylated (N-linked (GlcNAc...) asparagine). A WSXWS motif motif is present at residues 240–244; that stretch reads YGEFS. A helical transmembrane segment spans residues 265 to 288; sequence FPWFLIIIFGIFGLTMILFLFIFS. Over 289–638 the chain is Cytoplasmic; sequence KQQRIKMLIL…STDQLNKIMP (350 aa). Residues 294-379 form a required for JAK2 binding region; sequence KMLILPPVPV…HEKSLNILGA (86 aa). The Box 1 motif signature appears at 297-305; that stretch reads ILPPVPVPK. A UbE motif motif is present at residues 340 to 349; that stretch reads DSWVEFIELD. Residue Ser341 is modified to Phosphoserine. Positions 429–446 are enriched in polar residues; that stretch reads KNQSNSPSTDTAPNTQQP. Residues 429 to 448 are disordered; that stretch reads KNQSNSPSTDTAPNTQQPGV. Phosphotyrosine is present on residues Tyr487 and Tyr595.

Belongs to the type I cytokine receptor family. Type 1 subfamily. In terms of assembly, on growth hormone (GH) binding, forms homodimers and binds JAK2 via a box 1-containing domain. The soluble form (GHBP) is produced by phorbol ester-promoted proteolytic cleavage at the cell surface (shedding) by ADAM17/TACE. Shedding is inhibited by growth hormone (GH) binding to the receptor probably due to a conformational change in GHR rendering the receptor inaccessible to ADAM17. Post-translationally, on GH binding, phosphorylated on tyrosine residues in the cytoplasmic domain by JAK2. In terms of processing, ubiquitinated by the ECS(SOCS2) complex following ligand-binding and phosphorylation by JAK2, leading to its degradation by the proteasome. Regulation by the ECS(SOCS2) complex acts as a negative feedback loop of growth hormone receptor signaling. Ubiquitination is not sufficient for GHR internalization.

It is found in the cell membrane. The protein localises to the secreted. Its function is as follows. Receptor for pituitary gland growth hormone (GH1) involved in regulating postnatal body growth. On ligand binding, couples to the JAK2/STAT5 pathway. In terms of biological role, the soluble form (GHBP) acts as a reservoir of growth hormone in plasma and may be a modulator/inhibitor of GH signaling. The polypeptide is Growth hormone receptor (GHR) (Ailuropoda melanoleuca (Giant panda)).